We begin with the raw amino-acid sequence, 227 residues long: D-lyxose/D-mannose isomerase (227 aa).

D-fructose contacts are provided by residues lysine 90, 103-110 (HFHWRKRE), histidine 171, glutamate 186, and aspartate 193. Histidine 103, histidine 105, glutamate 110, and histidine 171 together coordinate Mn(2+).

This sequence belongs to the D-lyxose ketol-isomerase family. As to quaternary structure, homodimer; disulfide-linked. Dimerization is facilitated through a disulfide bond between the two monomers of the dimeric enzyme. Mn(2+) is required as a cofactor.

The catalysed reaction is D-lyxose = D-xylulose. It catalyses the reaction D-mannose = D-fructose. In terms of biological role, sugar isomerase that catalyzes the reversible isomerization of D-lyxose to D-xylulose, and D-mannose to D-fructose. Shows similar activity toward D-lyxose and D-mannose with a turnover and catalytic efficiency for D-lyxose as a substrate only 1.1- and 1.3-fold higher than those for D-mannose, respectively. Shows weaker activity with L-gulose, D-talose, L-ribose and L-allose. Overexpression enables cell growth on the rare pentose D-lyxose as the sole carbon source. This chain is D-lyxose/D-mannose isomerase, found in Escherichia coli O157:H7.